The following is a 332-amino-acid chain: Oligopeptide transport ATP-binding protein OppF (332 aa).

In terms of domain architecture, ABC transporter spans Lys23 to Met264. An ATP-binding site is contributed by Gly56–Ser63.

This sequence belongs to the ABC transporter superfamily. As to quaternary structure, the complex is composed of two ATP-binding proteins (OppD and OppF), two transmembrane proteins (OppB and OppC) and a solute-binding protein (OppA).

Its subcellular location is the cell inner membrane. The catalysed reaction is a [peptide](out) + ATP + H2O = a [peptide](in) + ADP + phosphate + H(+). Functionally, part of the ABC transporter complex OppABCDF involved in the uptake of oligopeptides. Probably responsible for energy coupling to the transport system. The protein is Oligopeptide transport ATP-binding protein OppF (oppF) of Haemophilus influenzae (strain ATCC 51907 / DSM 11121 / KW20 / Rd).